Here is a 533-residue protein sequence, read N- to C-terminus: Flavin-containing monooxygenase 5 (533 aa).

Position 5 is a dimethylated arginine (Arg-5). Residues Gly-10 to Ser-14, Glu-33, and Leu-41 to Trp-42 contribute to the FAD site. Ser-54 is subject to Phosphoserine. A Phosphotyrosine modification is found at Tyr-56. Ser-58 is modified (phosphoserine). Asn-62–Thr-63 contributes to the FAD binding site. Position 196-199 (Ser-196–Asp-199) interacts with NADP(+). Residue Ser-280 is modified to Phosphoserine. Phosphothreonine is present on Thr-284. Ser-401 carries the post-translational modification Phosphoserine. Residues Thr-513–Phe-533 traverse the membrane as a helical segment.

This sequence belongs to the FMO family. It depends on FAD as a cofactor. As to expression, expressed in fetal and adult liver.

It is found in the microsome membrane. The protein resides in the endoplasmic reticulum membrane. It catalyses the reaction N,N-dimethylaniline + NADPH + O2 + H(+) = N,N-dimethylaniline N-oxide + NADP(+) + H2O. The catalysed reaction is NADPH + O2 + H(+) = H2O2 + NADP(+). The enzyme catalyses heptan-2-one + NADPH + O2 + H(+) = pentyl acetate + NADP(+) + H2O. It carries out the reaction octan-3-one + NADPH + O2 + H(+) = pentyl propanoate + NADP(+) + H2O. It catalyses the reaction octan-3-one + NADPH + O2 + H(+) = ethyl hexanoate + NADP(+) + H2O. The catalysed reaction is hexan-3-one + NADPH + O2 + H(+) = ethyl butanoate + NADP(+) + H2O. The enzyme catalyses hexan-3-one + NADPH + O2 + H(+) = propyl propanoate + NADP(+) + H2O. It carries out the reaction heptan-4-one + NADPH + O2 + H(+) = propyl butanoate + NADP(+) + H2O. It catalyses the reaction (2E)-geranial + NADPH + O2 + H(+) = (1E)-2,6-dimethylhepta-1,5-dien-1-yl formate + NADP(+) + H2O. The catalysed reaction is sulcatone + NADPH + O2 + H(+) = 4-methylpent-3-en-1-yl acetate + NADP(+) + H2O. In terms of biological role, acts as a Baeyer-Villiger monooxygenase on a broad range of substrates. Catalyzes the insertion of an oxygen atom into a carbon-carbon bond adjacent to a carbonyl, which converts ketones to esters. Active on diverse carbonyl compounds, whereas soft nucleophiles are mostly non- or poorly reactive. In contrast with other forms of FMO it is non- or poorly active on 'classical' substrates such as drugs, pesticides, and dietary components containing soft nucleophilic heteroatoms. Able to oxidize drug molecules bearing a carbonyl group on an aliphatic chain, such as nabumetone and pentoxifylline. Also, in the absence of substrates, shows slow but yet significant NADPH oxidase activity. Acts as a positive modulator of cholesterol biosynthesis as well as glucose homeostasis, promoting metabolic aging via pleiotropic effects. This is Flavin-containing monooxygenase 5 from Homo sapiens (Human).